The sequence spans 129 residues: Fluoride-specific ion channel FluC 2 (129 aa).

The next 4 membrane-spanning stretches (helical) occupy residues 3 to 23, 32 to 52, 59 to 79, and 90 to 110; these read FLYV…MNLW, ATLA…QFLA, LVIL…FSAF, and GAWL…LIMV. The Na(+) site is built by G71 and T74.

Belongs to the fluoride channel Fluc/FEX (TC 1.A.43) family.

The protein resides in the cell membrane. The catalysed reaction is fluoride(in) = fluoride(out). With respect to regulation, na(+) is not transported, but it plays an essential structural role and its presence is essential for fluoride channel function. In terms of biological role, fluoride-specific ion channel. Important for reducing fluoride concentration in the cell, thus reducing its toxicity. The sequence is that of Fluoride-specific ion channel FluC 2 from Listeria monocytogenes serotype 4b (strain F2365).